The primary structure comprises 291 residues: Elongation factor Ts (291 aa).

The tract at residues Thr82–Cys85 is involved in Mg(2+) ion dislocation from EF-Tu.

Belongs to the EF-Ts family.

The protein resides in the cytoplasm. Its function is as follows. Associates with the EF-Tu.GDP complex and induces the exchange of GDP to GTP. It remains bound to the aminoacyl-tRNA.EF-Tu.GTP complex up to the GTP hydrolysis stage on the ribosome. This is Elongation factor Ts from Methylobacillus flagellatus (strain ATCC 51484 / DSM 6875 / VKM B-1610 / KT).